A 312-amino-acid chain; its full sequence is Short-chain dehydrogenase/reductase pkfC (312 aa).

Residues lysine 56, asparagine 108, and lysine 140 each coordinate NADP(+). Serine 164 acts as the Proton donor in catalysis. Residues tyrosine 193 and lysine 197 each contribute to the NADP(+) site. Residue tyrosine 193 is the Proton acceptor of the active site. Lysine 197 serves as the catalytic Lowers pKa of active site Tyr.

It belongs to the short-chain dehydrogenases/reductases (SDR) family.

It participates in secondary metabolite biosynthesis. Its function is as follows. Short-chain dehydrogenase/reductase; part of the gene cluster that mediates the biosynthesis of aspernidine A, a prenylated isoindolinone. The starting point of the biosynthesis of aspernidin A is the production of orsellinaldehyde by the non-reducing polyketide synthase pkfA. Hydroxylation, methylation of one of the phenol groups, and prenylation, presumably catalyzed by the prenyltransferase pkfE, would be needed to yield aspernidine D. Subsequently, the cytochrome P450 monooxygenase pkfB is responsible for hydroxylation of aspernidine D to yield aspernidine E. The dehydrogenase pkfF may be responsible for further oxidation of aspernidine E to form a dialdehyde intermediate which is further transformed in a series of steps, some of which are enzyme-mediated, to generate aspernidine A. The possibility that additional enzymes outside of the cluster are involved in aspernidine A biosynthesis cannot be excluded. The protein is Short-chain dehydrogenase/reductase pkfC of Emericella nidulans (strain FGSC A4 / ATCC 38163 / CBS 112.46 / NRRL 194 / M139) (Aspergillus nidulans).